Reading from the N-terminus, the 141-residue chain is Large ribosomal subunit protein uL11 (141 aa).

Belongs to the universal ribosomal protein uL11 family. In terms of assembly, part of the ribosomal stalk of the 50S ribosomal subunit. Interacts with L10 and the large rRNA to form the base of the stalk. L10 forms an elongated spine to which L12 dimers bind in a sequential fashion forming a multimeric L10(L12)X complex. In terms of processing, one or more lysine residues are methylated.

Forms part of the ribosomal stalk which helps the ribosome interact with GTP-bound translation factors. This is Large ribosomal subunit protein uL11 from Synechococcus sp. (strain JA-3-3Ab) (Cyanobacteria bacterium Yellowstone A-Prime).